The following is a 306-amino-acid chain: Agmatinase (306 aa).

Mn(2+)-binding residues include His-126, Asp-149, His-151, Asp-153, Asp-230, and Asp-232.

This sequence belongs to the arginase family. Agmatinase subfamily. Mn(2+) is required as a cofactor.

It carries out the reaction agmatine + H2O = urea + putrescine. Its pathway is amine and polyamine biosynthesis; putrescine biosynthesis via agmatine pathway; putrescine from agmatine: step 1/1. Its function is as follows. Catalyzes the formation of putrescine from agmatine. The polypeptide is Agmatinase (Escherichia coli O9:H4 (strain HS)).